Consider the following 99-residue polypeptide: Small ribosomal subunit protein cS23 (99 aa).

It belongs to the chloroplast-specific ribosomal protein cS23 family. In terms of assembly, part of the 30S ribosomal subunit.

Its subcellular location is the plastid. The protein localises to the chloroplast. Probably a ribosomal protein or a ribosome-associated protein. The sequence is that of Small ribosomal subunit protein cS23 from Gracilaria tenuistipitata var. liui (Red alga).